The following is a 195-amino-acid chain: Imidazoleglycerol-phosphate dehydratase (195 aa).

It belongs to the imidazoleglycerol-phosphate dehydratase family.

The protein localises to the cytoplasm. The enzyme catalyses D-erythro-1-(imidazol-4-yl)glycerol 3-phosphate = 3-(imidazol-4-yl)-2-oxopropyl phosphate + H2O. It participates in amino-acid biosynthesis; L-histidine biosynthesis; L-histidine from 5-phospho-alpha-D-ribose 1-diphosphate: step 6/9. This Nitrosomonas eutropha (strain DSM 101675 / C91 / Nm57) protein is Imidazoleglycerol-phosphate dehydratase.